A 354-amino-acid chain; its full sequence is Uroporphyrinogen decarboxylase (354 aa).

Substrate-binding positions include 27-31 (RQAGR), F46, D77, Y154, S209, and H327.

It belongs to the uroporphyrinogen decarboxylase family. In terms of assembly, homodimer.

It is found in the cytoplasm. It catalyses the reaction uroporphyrinogen III + 4 H(+) = coproporphyrinogen III + 4 CO2. Its pathway is porphyrin-containing compound metabolism; protoporphyrin-IX biosynthesis; coproporphyrinogen-III from 5-aminolevulinate: step 4/4. Its function is as follows. Catalyzes the decarboxylation of four acetate groups of uroporphyrinogen-III to yield coproporphyrinogen-III. In Pseudomonas syringae pv. tomato (strain ATCC BAA-871 / DC3000), this protein is Uroporphyrinogen decarboxylase.